Here is a 205-residue protein sequence, read N- to C-terminus: UPF0688 protein C1orf174 homolog (205 aa).

The segment covering 1–18 has biased composition (basic residues); the sequence is MRKRKLSDRVRCSARLKN. Disordered stretches follow at residues 1–128 and 184–205; these read MRKR…PSKV and AKEE…EGNI. The segment covering 46 to 63 has biased composition (basic and acidic residues); that stretch reads NTDKKSPKKLENDEKGLM. Residues 71–108 show a composition bias toward polar residues; the sequence is INKTDNTASNESNAGNVNTCPSASPFSDLNEVSRNGLT. Positions 187-196 are enriched in acidic residues; that stretch reads EEEDDDDDYA.

This sequence belongs to the UPF0688 family.

It is found in the nucleus. In Xenopus laevis (African clawed frog), this protein is UPF0688 protein C1orf174 homolog.